Reading from the N-terminus, the 235-residue chain is Cytochrome c-554 (235 aa).

The signal sequence occupies residues 1–24; it reads MKIMIACGLVAAALFTLTSGQSLA. Heme-binding residues include C35, C38, H39, H51, C84, C87, H88, C112, C115, H116, H126, C158, C161, H162, and H203. Positions 121–144 are disordered; the sequence is NFRGDHRKSGQAFEKSGKKTPRKD.

Post-translationally, binds 4 heme groups per subunit.

Its subcellular location is the periplasm. In terms of biological role, involved in ammonia oxidation; accepts electrons directly from hydroxylamine oxidoreductase (HAO). In Nitrosomonas europaea (strain ATCC 19718 / CIP 103999 / KCTC 2705 / NBRC 14298), this protein is Cytochrome c-554 (cycA1).